A 320-amino-acid chain; its full sequence is MSKSASPKEPEQLRKLFIGGLSFETTDESLRSHFEQWGTLTDCVVMRDPNTKRSRGFGFVTYATVEEVDAAMNTTPHKVDGRVVEPKRAVSREDSQRPGAHLTVKKIFVGGIKEDTEEHHLRDYFEQYGKIEVIEIMTDRGSGKKRGFAFVTFDDHDSVDKIVIQKYHTVKGHNCEVRKALPKQEMASASSSQRGRRGSGNFGGGRGDGFGGNDNFGRGGNFSGRGGFGGSCGGGGYGGSGDGYNGFGNDGSNFGGGGSYNDFGNYNNQSSNFGPMKGGNFGGRSSGPYGGGGQYFAKPQNQGGYGVSSSSSSYGSGRRF.

The tract at residues 4-94 (SASPKEPEQL…EPKRAVSRED (91 aa)) is globular A domain. Phosphoserine is present on residues Ser-6 and Ser-22. RRM domains follow at residues 14–97 (RKLF…DSQR) and 105–184 (KKIF…LPKQ). The globular B domain stretch occupies residues 95 to 185 (SQRPGAHLTV…EVRKALPKQE (91 aa)). The interval 181-216 (LPKQEMASASSSQRGRRGSGNFGGGRGDGFGGNDNF) is disordered. Asymmetric dimethylarginine; alternate occurs at positions 194, 206, 218, and 225. Omega-N-methylarginine; alternate occurs at positions 194, 206, 218, and 225. A compositionally biased stretch (gly residues) spans 198-216 (GSGNFGGGRGDGFGGNDNF). The RNA-binding RGG-box stretch occupies residues 218–240 (RGGNFSGRGGFGGSCGGGGYGGS). Residues 268–305 (NQSSNFGPMKGGNFGGRSSGPYGGGGQYFAKPQNQGGY) are nuclear targeting sequence. The disordered stretch occupies residues 271–320 (SNFGPMKGGNFGGRSSGPYGGGGQYFAKPQNQGGYGVSSSSSSYGSGRRF). The span at 276 to 294 (MKGGNFGGRSSGPYGGGGQ) shows a compositional bias: gly residues. Residue Arg-284 is modified to Omega-N-methylarginine. Position 298 is an N6-acetyllysine (Lys-298). Positions 307-320 (VSSSSSSYGSGRRF) are enriched in low complexity.

Its subcellular location is the nucleus. The protein localises to the cytoplasm. Functionally, involved in the packaging of pre-mRNA into hnRNP particles, transport of poly(A) mRNA from the nucleus to the cytoplasm and may modulate splice site selection. This is Heterogeneous nuclear ribonucleoprotein A1-like 2 (HNRNPA1L2) from Homo sapiens (Human).